Here is a 376-residue protein sequence, read N- to C-terminus: RCC1 domain-containing protein 1 (376 aa).

Residues 1-169 (MAEERPGAWF…ARQLELGAEH (169 aa)) form an interaction with KDM8 region. One copy of the RCC1 1 repeat lies at 6–56 (PGAWFGFGFCGFGQELGSGRGRQVHSPSPLRAGVDICRVSASWSYTAFVTR). (3R)-3-hydroxyarginine is present on Arg-141. RCC1 repeat units follow at residues 176-227 (AGQV…CVSE), 229-317 (GDIY…VVTR), and 318-371 (TGEL…VYAV).

As to quaternary structure, found in a complex with KDM8. Interacts (via N-terminus) with KDM8 (via N-terminus). In terms of processing, specifically hydroxylated (with R stereochemistry) at C-3 of ARG-141 by KDM8.

Its subcellular location is the chromosome. Functionally, plays a role in transcriptional repression of satellite repeats, possibly by regulating H3K36 methylation levels in centromeric regions together with KDM8. Possibly together with KDM8, is involved in proper mitotic spindle organization and chromosome segregation. Plays a role in regulating alpha-tubulin deacetylation and cytoskeletal microtubule stability, thereby promoting cell migration and TGF-beta-induced epithelial to mesenchymal transition (EMT), potentially through the inhibition of KDM8. In Homo sapiens (Human), this protein is RCC1 domain-containing protein 1.